A 489-amino-acid polypeptide reads, in one-letter code: Putative general secretion pathway protein A (489 aa).

26-33 (GEAGSGKT) is an ATP binding site. Residues 237 to 257 (MQLAVVMSGTIIALTCGWLLL) traverse the membrane as a helical segment.

It belongs to the ExeA family.

The protein localises to the cell membrane. In terms of biological role, may play a regulatory role under conditions of derepressed gsp gene expression. This Escherichia coli (strain K12) protein is Putative general secretion pathway protein A (gspA).